We begin with the raw amino-acid sequence, 106 residues long: MSATSEMLAEINEVNLSYLLLAQRLLREDKAMGMFRMGISEELADVLANLTLAQTVKLAASNQMLCRFRFDDHALLSSLADKGRSSAVSHAHSAILMAGQPVESLR.

This sequence belongs to the FlhD family. In terms of assembly, homodimer; disulfide-linked. Forms a heterohexamer composed of two FlhC and four FlhD subunits. Each FlhC binds a FlhD dimer, forming a heterotrimer, and a hexamer assembles by dimerization of two heterotrimers.

It localises to the cytoplasm. Functions in complex with FlhC as a master transcriptional regulator that regulates transcription of several flagellar and non-flagellar operons by binding to their promoter region. Activates expression of class 2 flagellar genes, including fliA, which is a flagellum-specific sigma factor that turns on the class 3 genes. Also regulates genes whose products function in a variety of physiological pathways. In Burkholderia pseudomallei (strain 1710b), this protein is Flagellar transcriptional regulator FlhD.